The chain runs to 432 residues: Anaerobic glycerol-3-phosphate dehydrogenase subunit B (432 aa).

The protein belongs to the anaerobic G-3-P dehydrogenase subunit B family. In terms of assembly, composed of a catalytic GlpA/B dimer and of membrane bound GlpC. It depends on FMN as a cofactor.

The catalysed reaction is a quinone + sn-glycerol 3-phosphate = dihydroxyacetone phosphate + a quinol. It functions in the pathway polyol metabolism; glycerol degradation via glycerol kinase pathway; glycerone phosphate from sn-glycerol 3-phosphate (anaerobic route): step 1/1. In terms of biological role, conversion of glycerol 3-phosphate to dihydroxyacetone. Uses fumarate or nitrate as electron acceptor. The polypeptide is Anaerobic glycerol-3-phosphate dehydrogenase subunit B (glpB) (Haemophilus influenzae (strain ATCC 51907 / DSM 11121 / KW20 / Rd)).